The primary structure comprises 962 residues: Villin-5 (962 aa).

6 Gelsolin-like repeats span residues 29 to 79 (FKPV…DEAG), 150 to 190 (VRVK…QERA), 262 to 305 (GQTD…DQRK), 396 to 453 (LQVW…EDRA), 534 to 574 (MQAI…EDQE), and 636 to 677 (LKAT…KKKP). The interval 749-785 (KPKRRVPAYSSRSTVPDKSQPRSRSMTFSPDRARVRG) is disordered. The segment covering 758 to 776 (SSRSTVPDKSQPRSRSMTF) has biased composition (polar residues). Residues serine 777 and serine 787 each carry the phosphoserine modification. Over residues 845-862 (EKPTPTSQEPPTSPSSSE) the composition is skewed to low complexity. The segment at 845–917 (EKPTPTSQEP…LKTDSEDPVS (73 aa)) is disordered. The segment covering 863–875 (ATNQAEAPKSTSE) has biased composition (polar residues). Serine 883 carries the phosphoserine modification. Residues 889–898 (SKEEEAEEES) are compositionally biased toward acidic residues. One can recognise an HP domain in the interval 897-962 (ESSLPTFPYE…NKLKMSVNLF (66 aa)).

Belongs to the villin/gelsolin family. In terms of tissue distribution, ubiquitous, but expressed preferentially in pollen and stamens.

The protein localises to the cytoplasm. Its subcellular location is the cytoskeleton. Its function is as follows. Major actin filament stabilizing factor and regulator of actin dynamics. Binds actin and actin filament bundles in a Ca(2+)-insensitive manner, but caps the barbed end of actin filaments and is able to sever them in a calcium-dependent manner. Required for the construction of actin collars in pollen tubes. Acts synergistically with VLN2 (AC O81644) to regulate polarized pollen tube growth. This Arabidopsis thaliana (Mouse-ear cress) protein is Villin-5.